Reading from the N-terminus, the 835-residue chain is Protein translocase subunit SecA (835 aa).

Residues Gln-85, 103-107 (GEGKT), and Asp-492 each bind ATP. Zn(2+) contacts are provided by Cys-819, Cys-821, Cys-830, and Cys-831.

The protein belongs to the SecA family. In terms of assembly, monomer and homodimer. Part of the essential Sec protein translocation apparatus which comprises SecA, SecYEG and auxiliary proteins SecDF. Other proteins may also be involved. The cofactor is Zn(2+).

It localises to the cell membrane. It is found in the cytoplasm. The catalysed reaction is ATP + H2O + cellular proteinSide 1 = ADP + phosphate + cellular proteinSide 2.. In terms of biological role, part of the Sec protein translocase complex. Interacts with the SecYEG preprotein conducting channel. Has a central role in coupling the hydrolysis of ATP to the transfer of proteins into and across the cell membrane, serving as an ATP-driven molecular motor driving the stepwise translocation of polypeptide chains across the membrane. This Clostridium botulinum (strain Okra / Type B1) protein is Protein translocase subunit SecA.